A 156-amino-acid chain; its full sequence is uncharacterized protein (156 aa).

His55 is a catalytic residue.

It belongs to the thioester dehydratase family. FabZ subfamily.

This is an uncharacterized protein from Halalkalibacterium halodurans (strain ATCC BAA-125 / DSM 18197 / FERM 7344 / JCM 9153 / C-125) (Bacillus halodurans).